Here is a 520-residue protein sequence, read N- to C-terminus: GMP synthase [glutamine-hydrolyzing] (520 aa).

Positions Thr-9–Asp-202 constitute a Glutamine amidotransferase type-1 domain. Catalysis depends on Cys-86, which acts as the Nucleophile. Active-site residues include His-176 and Glu-178. One can recognise a GMPS ATP-PPase domain in the interval Trp-203–Arg-395. Ser-230–Ser-236 is an ATP binding site.

As to quaternary structure, homodimer.

It carries out the reaction XMP + L-glutamine + ATP + H2O = GMP + L-glutamate + AMP + diphosphate + 2 H(+). It participates in purine metabolism; GMP biosynthesis; GMP from XMP (L-Gln route): step 1/1. Catalyzes the synthesis of GMP from XMP. This is GMP synthase [glutamine-hydrolyzing] from Sinorhizobium fredii (strain NBRC 101917 / NGR234).